A 433-amino-acid polypeptide reads, in one-letter code: Actin-related protein 4 (433 aa).

The interval Gly-289 to Val-317 is disordered. The segment covering Ile-302–Val-317 has biased composition (polar residues).

This sequence belongs to the actin family. ARP4 subfamily. In terms of assembly, component of the NuA4 histone acetyltransferase complex, of the INO80 chromatin remodeling complex, and of the SWR1 chromatin remodeling complex.

The protein resides in the nucleus. Functionally, chromatin interaction component of the NuA4 histone acetyltransferase complex which is involved in transcriptional activation of selected genes principally by acetylation of nucleosomal histone H4 and H2A. The NuA4 complex is also involved in DNA repair. Is required for NuA4 complex integrity. Component of the SWR1 complex which mediates the ATP-dependent exchange of histone H2A for the H2A variant HZT1 leading to transcriptional regulation of selected genes by chromatin remodeling. Component of the INO80 complex which remodels chromatin by shifting nucleosomes and is involved in DNA repair. The chain is Actin-related protein 4 (alp5) from Schizosaccharomyces pombe (strain 972 / ATCC 24843) (Fission yeast).